Here is a 335-residue protein sequence, read N- to C-terminus: Galactosylgalactosylxylosylprotein 3-beta-glucuronosyltransferase 1 (335 aa).

The Cytoplasmic portion of the chain corresponds to 1–6 (MPKRRD). The essential for transport from endoplasmic reticulum to Golgi apparatus and interaction with SAR1A stretch occupies residues 3 to 5 (KRR). Residues 7–27 (ILAIVLIVLPWTLLVTVWHQS) traverse the membrane as a helical; Signal-anchor for type II membrane protein segment. Topologically, residues 28–335 (TIAPLLTTHK…KGFTDPTVEI (308 aa)) are lumenal. Residue 92–94 (PTY) participates in UDP-alpha-D-glucuronate binding. T104 and T109 each carry phosphothreonine. A UDP-alpha-D-glucuronate-binding site is contributed by D123. N141 is a glycosylation site (N-linked (GlcNAc...) asparagine). Residues R166 and R171 each coordinate UDP-alpha-D-glucuronate. N185 is a glycosylation site (N-linked (GlcNAc...) asparagine). 196-198 (DDD) contributes to the UDP-alpha-D-glucuronate binding site. Residue D198 participates in Mn(2+) binding. The segment at 246–255 (FDPHRPFAID) is interaction with galactose moiety of substrate glycoprotein. E285 serves as the catalytic Proton donor/acceptor. A glycan (N-linked (GlcNAc...) asparagine) is linked at N304. 312–314 (HTR) serves as a coordination point for UDP-alpha-D-glucuronate.

The protein belongs to the glycosyltransferase 43 family. As to quaternary structure, homodimer. Interacts with SAR1A. It depends on Mn(2+) as a cofactor. In terms of processing, the soluble form derives from the membrane form by proteolytic processing.

The protein resides in the golgi apparatus membrane. It localises to the secreted. It carries out the reaction 3-O-(beta-D-galactosyl-(1-&gt;3)-beta-D-galactosyl-(1-&gt;4)-beta-D-xylosyl)-L-seryl-[protein] + UDP-alpha-D-glucuronate = 3-O-(beta-D-GlcA-(1-&gt;3)-beta-D-Gal-(1-&gt;3)-beta-D-Gal-(1-&gt;4)-beta-D-Xyl)-L-seryl-[protein] + UDP + H(+). Its pathway is protein modification; protein glycosylation. Involved in the biosynthesis of L2/HNK-1 carbohydrate epitope on glycoproteins. Can also play a role in glycosaminoglycan biosynthesis. Substrates include asialo-orosomucoid (ASOR), asialo-fetuin, and asialo-neural cell adhesion molecule. Requires sphingomyelin for activity: stearoyl-sphingomyelin was the most effective, followed by palmitoyl-sphingomyelin and lignoceroyl-sphingomyelin. Activity was demonstrated only for sphingomyelin with a saturated fatty acid and not for that with an unsaturated fatty acid, regardless of the length of the acyl group. The chain is Galactosylgalactosylxylosylprotein 3-beta-glucuronosyltransferase 1 from Canis lupus familiaris (Dog).